An 88-amino-acid chain; its full sequence is MNLSLLLFLIGILGFILNRKNIILMIIAIEIMLLAITLLVLMSSVSFDDIAGQTFSIYIISIAGAESVIGLSILVAYYRLRGTISLRT.

Transmembrane regions (helical) follow at residues 1 to 21, 22 to 42, and 55 to 75; these read MNLSLLLFLIGILGFILNRKN, IILMIIAIEIMLLAITLLVLM, and FSIYIISIAGAESVIGLSILV.

The protein belongs to the complex I subunit 4L family.

The protein localises to the mitochondrion membrane. The enzyme catalyses a ubiquinone + NADH + 5 H(+)(in) = a ubiquinol + NAD(+) + 4 H(+)(out). Core subunit of the mitochondrial membrane respiratory chain NADH dehydrogenase (Complex I) that is believed to belong to the minimal assembly required for catalysis. Complex I functions in the transfer of electrons from NADH to the respiratory chain. The immediate electron acceptor for the enzyme is believed to be ubiquinone. The protein is NADH-ubiquinone oxidoreductase chain 4L (ND4L) of Schizophyllum commune (Split gill fungus).